Reading from the N-terminus, the 361-residue chain is Putative agmatine deiminase (361 aa).

The active-site Amidino-cysteine intermediate is the cysteine 354.

Belongs to the agmatine deiminase family.

The enzyme catalyses agmatine + H2O = N-carbamoylputrescine + NH4(+). This is Putative agmatine deiminase from Streptococcus pneumoniae (strain ATCC BAA-255 / R6).